The chain runs to 460 residues: Polygalacturonase (460 aa).

The first 26 residues, 1–26 (MALKTQLLWSFVVVFVVSFSTTSCSG), serve as a signal peptide directing secretion. A glycan (N-linked (GlcNAc...) asparagine) is linked at N280. D292 (proton donor) is an active-site residue. H315 is a catalytic residue. An N-linked (GlcNAc...) asparagine glycan is attached at N421.

This sequence belongs to the glycosyl hydrolase 28 family.

The protein resides in the secreted. Its subcellular location is the cell wall. It carries out the reaction (1,4-alpha-D-galacturonosyl)n+m + H2O = (1,4-alpha-D-galacturonosyl)n + (1,4-alpha-D-galacturonosyl)m.. Its function is as follows. Acts in concert with the pectinesterase, in the ripening process. Is involved in cell wall metabolism, specifically in polyuronide degradation. The chain is Polygalacturonase from Malus domestica (Apple).